The following is a 503-amino-acid chain: Adenosine deaminase 2-A (503 aa).

The signal sequence occupies residues M1–G24. H105 and H107 together coordinate Zn(2+). D108 is a binding site for substrate. N-linked (GlcNAc...) asparagine glycosylation occurs at N120. An intrachain disulfide couples C130 to C152. N-linked (GlcNAc...) asparagine glycosylation is found at N167 and N178. Residues W197 to F204 and H286 each bind substrate. Residue N290 is glycosylated (N-linked (GlcNAc...) asparagine). G319 serves as a coordination point for substrate. H349 contributes to the Zn(2+) binding site. The active-site Proton donor is E352. The N-linked (GlcNAc...) asparagine glycan is linked to N371. H377 acts as the Proton acceptor in catalysis. D434 is a Zn(2+) binding site. D435 provides a ligand contact to substrate.

The protein belongs to the metallo-dependent hydrolases superfamily. Adenosine and AMP deaminases family. ADGF subfamily. Zn(2+) serves as cofactor.

The protein resides in the secreted. It catalyses the reaction adenosine + H2O + H(+) = inosine + NH4(+). In terms of biological role, adenosine deaminase that may contribute to the degradation of extracellular adenosine, a signaling molecule that controls a variety of cellular responses. May play a role in the regulation of cell proliferation. The chain is Adenosine deaminase 2-A from Danio rerio (Zebrafish).